We begin with the raw amino-acid sequence, 352 residues long: Type II restriction enzyme HaeII (352 aa).

The enzyme catalyses Endonucleolytic cleavage of DNA to give specific double-stranded fragments with terminal 5'-phosphates.. In terms of biological role, a P subtype restriction enzyme that recognizes the double-stranded sequence 5'-RGCGCY-3' and cleaves after C-5. This is Type II restriction enzyme HaeII (haeIIR) from Haemophilus aegyptius.